Consider the following 350-residue polypeptide: LIM domain-containing protein unc-95 (350 aa).

Positions 1-37 (MTISPQPSHQQFESYQWTTESRSSQQRHGTGTPSQDG) are enriched in polar residues. The disordered stretch occupies residues 1-65 (MTISPQPSHQ…ESRNSNKDKV (65 aa)). Residues 45 to 65 (PVERHVARWRSESRNSNKDKV) are compositionally biased toward basic and acidic residues. Residues 83–110 (LTALKNDVEQTTEIIRRKQEQMRMERRQ) are a coiled coil. Disordered regions lie at residues 177-198 (RRGQ…EIEY), 206-225 (PEEQ…METD), and 235-262 (MSEE…SGSP). The LIM zinc-binding domain occupies 268-334 (AVCAYCSEEI…HDCFYKLYNG (67 aa)).

In terms of processing, ubiquitinated. Ubiquitination by rnf-5 leads to dissociation from muscle dense bodies during molting and is required for ecdysis. As to expression, expressed in the body wall muscles, vulval muscles and the anal muscles. Expressed in the muscle arms of the head muscle cells that form neuromuscular junctions and in the anal depressor muscle.

It localises to the cytoplasm. Its subcellular location is the nucleus. It is found in the cell membrane. The protein resides in the myofibril. The protein localises to the sarcomere. It localises to the m line. Its subcellular location is the cell junction. It is found in the focal adhesion. Functionally, required for the assembly and integrity of muscle dense bodies, which establish the adhesion sites of the muscle cells to the extracellular matrix. Decreased localization of unc-95 to dense bodies and their subsequent dissociation plays an important role in ecdysis during molting. Involved in the organization of the muscle sarcomeric structure and thereby required for locomotion. The chain is LIM domain-containing protein unc-95 from Caenorhabditis elegans.